A 480-amino-acid polypeptide reads, in one-letter code: RuvB-like helicase 2 (480 aa).

Residue 73–80 participates in ATP binding; that stretch reads GEPSTGKT.

It belongs to the RuvB family. Forms homohexameric rings. May form a dodecamer with rept made of two stacked hexameric rings. Component of the chromatin remodeling Ino80 complex.

It localises to the nucleus. The enzyme catalyses ATP + H2O = ADP + phosphate + H(+). Acts as a transcriptional coactivator in Wg signaling caused by altered arm signaling. Pont and rept interfere antagonistically with nuclear arm signaling function, and are required to enhance or reduce arm activity, respectively. Also an essential cofactor for the normal function of Myc; required for cellular proliferation and growth. In terms of biological role, proposed core component of the chromatin remodeling Ino80 complex which is involved in transcriptional regulation, DNA replication and probably DNA repair. In Drosophila pseudoobscura pseudoobscura (Fruit fly), this protein is RuvB-like helicase 2.